A 727-amino-acid polypeptide reads, in one-letter code: Polyribonucleotide nucleotidyltransferase (727 aa).

2 residues coordinate Mg(2+): Asp488 and Asp494. The region spanning 555–614 (PKLYTMKINPEKIRDVIGKGGATIRALTDETGCQINIEEDGTITIAATEAAKADEAKRRI) is the KH domain. The S1 motif domain occupies 624 to 692 (GKIYEGPVTK…DKGRVKLSMK (69 aa)). The segment at 691-727 (MKALADRPAGDSGRPAPAERGERRERRDGGASEQQQQ) is disordered. Residues 707-720 (PAERGERRERRDGG) show a composition bias toward basic and acidic residues.

It belongs to the polyribonucleotide nucleotidyltransferase family. The cofactor is Mg(2+).

It localises to the cytoplasm. It catalyses the reaction RNA(n+1) + phosphate = RNA(n) + a ribonucleoside 5'-diphosphate. Functionally, involved in mRNA degradation. Catalyzes the phosphorolysis of single-stranded polyribonucleotides processively in the 3'- to 5'-direction. The polypeptide is Polyribonucleotide nucleotidyltransferase (Acidovorax sp. (strain JS42)).